We begin with the raw amino-acid sequence, 141 residues long: Organic hydroperoxide resistance protein-like 1 (141 aa).

The disordered stretch occupies residues 1–20 (MAVNYETKATNTGGRNGHVQ).

Belongs to the OsmC/Ohr family.

The protein is Organic hydroperoxide resistance protein-like 1 of Staphylococcus saprophyticus subsp. saprophyticus (strain ATCC 15305 / DSM 20229 / NCIMB 8711 / NCTC 7292 / S-41).